Here is a 591-residue protein sequence, read N- to C-terminus: Formate--tetrahydrofolate ligase (591 aa).

74–81 (TPLGEGKS) provides a ligand contact to ATP.

This sequence belongs to the formate--tetrahydrofolate ligase family.

It catalyses the reaction (6S)-5,6,7,8-tetrahydrofolate + formate + ATP = (6R)-10-formyltetrahydrofolate + ADP + phosphate. It functions in the pathway one-carbon metabolism; tetrahydrofolate interconversion. The chain is Formate--tetrahydrofolate ligase from Desulforapulum autotrophicum (strain ATCC 43914 / DSM 3382 / VKM B-1955 / HRM2) (Desulfobacterium autotrophicum).